A 78-amino-acid polypeptide reads, in one-letter code: Large ribosomal subunit protein bL28 (78 aa).

Residues 1–25 (MSRVCQVTGKRPAVGNNRSHAKNAT) are disordered.

It belongs to the bacterial ribosomal protein bL28 family.

The polypeptide is Large ribosomal subunit protein bL28 (Vibrio cholerae serotype O1 (strain ATCC 39541 / Classical Ogawa 395 / O395)).